The chain runs to 157 residues: 3-hydroxyacyl-[acyl-carrier-protein] dehydratase FabZ (157 aa).

The active site involves histidine 58.

The protein belongs to the thioester dehydratase family. FabZ subfamily.

The protein resides in the cytoplasm. The enzyme catalyses a (3R)-hydroxyacyl-[ACP] = a (2E)-enoyl-[ACP] + H2O. Its function is as follows. Involved in unsaturated fatty acids biosynthesis. Catalyzes the dehydration of short chain beta-hydroxyacyl-ACPs and long chain saturated and unsaturated beta-hydroxyacyl-ACPs. In Rhizobium rhizogenes (strain K84 / ATCC BAA-868) (Agrobacterium radiobacter), this protein is 3-hydroxyacyl-[acyl-carrier-protein] dehydratase FabZ.